A 427-amino-acid chain; its full sequence is Glutamate-1-semialdehyde 2,1-aminomutase (427 aa).

N6-(pyridoxal phosphate)lysine is present on K265.

Belongs to the class-III pyridoxal-phosphate-dependent aminotransferase family. HemL subfamily. In terms of assembly, homodimer. Pyridoxal 5'-phosphate is required as a cofactor.

The protein localises to the cytoplasm. It catalyses the reaction (S)-4-amino-5-oxopentanoate = 5-aminolevulinate. The protein operates within porphyrin-containing compound metabolism; protoporphyrin-IX biosynthesis; 5-aminolevulinate from L-glutamyl-tRNA(Glu): step 2/2. In Pseudomonas putida (strain W619), this protein is Glutamate-1-semialdehyde 2,1-aminomutase.